Reading from the N-terminus, the 556-residue chain is Pumilio homolog 11 (556 aa).

One can recognise a PUM-HD domain in the interval 215–556; it reads GGSRELDGSA…RIFSKNLWKK (342 aa). Pumilio repeat units lie at residues 238-276, 277-313, 316-351, 353-388, 389-424, 425-459, 460-495, and 496-531; these read SMVD…IIFK, EVIN…ILIR, SKPG…SLVK, ALVP…FILE, AATK…KLVD, EISR…VLFE, LRGN…VNEL, and VSVL…SLVE.

It is found in the cytoplasm. Sequence-specific RNA-binding protein that regulates translation and mRNA stability by binding the 3'-UTR of target mRNAs. The chain is Pumilio homolog 11 (APUM11) from Arabidopsis thaliana (Mouse-ear cress).